The following is a 361-amino-acid chain: MSKLAVVAAGGTGGHMFPAQALAEALAARGWRVVLATDDRGALYADKFPAEERLALSAATAKSNDPLGMIKAGFVVLQGVMEARAAFKRLDPAVVVGFGGYPALPALLGALSQGRPTVIHEQNAVLGRVNRFLAPRVNEVACAFPILEKATPAVKACAHVVGNPVRPPVRALFDVPYLAPEVQLRVLVTGGSQGARLLSELIPEAVAKLPEEMRGRLKVFQQARAESMEQARKVYRNAMVECEVAPFFRDMAGYLRQSHLVIGRSGASTCTELAVAGRPSILIPLKIAADDHQRFNARLLEEAGGAAVCLEDELTVDVMAAALKALLSKPERLEKMAAGARSAAKPNAAEELADLVEKTAR.

Residues 12–14 (TGG), asparagine 123, arginine 166, serine 192, and glutamine 293 each bind UDP-N-acetyl-alpha-D-glucosamine.

Belongs to the glycosyltransferase 28 family. MurG subfamily.

The protein resides in the cell inner membrane. The catalysed reaction is di-trans,octa-cis-undecaprenyl diphospho-N-acetyl-alpha-D-muramoyl-L-alanyl-D-glutamyl-meso-2,6-diaminopimeloyl-D-alanyl-D-alanine + UDP-N-acetyl-alpha-D-glucosamine = di-trans,octa-cis-undecaprenyl diphospho-[N-acetyl-alpha-D-glucosaminyl-(1-&gt;4)]-N-acetyl-alpha-D-muramoyl-L-alanyl-D-glutamyl-meso-2,6-diaminopimeloyl-D-alanyl-D-alanine + UDP + H(+). The protein operates within cell wall biogenesis; peptidoglycan biosynthesis. Functionally, cell wall formation. Catalyzes the transfer of a GlcNAc subunit on undecaprenyl-pyrophosphoryl-MurNAc-pentapeptide (lipid intermediate I) to form undecaprenyl-pyrophosphoryl-MurNAc-(pentapeptide)GlcNAc (lipid intermediate II). The chain is UDP-N-acetylglucosamine--N-acetylmuramyl-(pentapeptide) pyrophosphoryl-undecaprenol N-acetylglucosamine transferase from Caulobacter vibrioides (strain ATCC 19089 / CIP 103742 / CB 15) (Caulobacter crescentus).